The following is a 196-amino-acid chain: HTH-type transcriptional regulator EcpR (196 aa).

The HTH luxR-type domain occupies 138–196 (KDIKKDKITDREMEIIRMTAQGMLPKSIARIENCSVKTVYTHRRNAEAKLYSKLYKLVQ). Residues 162-181 (PKSIARIENCSVKTVYTHRR) constitute a DNA-binding region (H-T-H motif).

The protein belongs to the EcpR/MatA family.

It localises to the cytoplasm. Its function is as follows. Part of the ecpRABCDE operon, which encodes the E.coli common pilus (ECP). ECP is found in both commensal and pathogenic strains and plays a dual role in early-stage biofilm development and host cell recognition. Positively regulates the expression of the ecp operon by binding to two TTCCT boxes. The polypeptide is HTH-type transcriptional regulator EcpR (ecpR) (Escherichia coli O157:H7).